We begin with the raw amino-acid sequence, 1550 residues long: Cellulose synthase 1 (1550 aa).

Residues 1-741 (MPEVRSSTQS…KERVLKGTVK (741 aa)) form a catalytic region. 3 helical membrane passes run 26-46 (GAGLIIGVFGLCALIAATSVT), 47-67 (LPPEQQLIVAFVCVVIFFIVG), and 106-126 (GLLGTMLLVAELYALMMLFLS). Positions 147–240 (EWPTVDIFVP…YILIFDCDHV (94 aa)) are catalytic subdomain A. Asp-189 is an active-site residue. The substrate site is built by Asp-236 and Asp-238. The tract at residues 317–377 (TAIEQIGGFA…GQRVRWARGM (61 aa)) is catalytic subdomain B. Asp-333 is an active-site residue. 5 helical membrane-spanning segments follow: residues 398–418 (LCYLSAMTSFLFAVPRVIFLS), 423–443 (FLFFGQNIIAASPLALLAYAI), 468–488 (VYETTMALFLVRVTIVTLLSP), 507–527 (FDLGAVYPNIILGLIMFGGLA), and 547–567 (LLNSAWAMLSLIIILAAIAVG). The PilZ domain occupies 572 to 647 (QKRNSHRIPA…PARIIRAGNG (76 aa)). 2 disordered regions span residues 708–731 (VHRSSPTKPSAGNALSDDTNNPSR) and 768–813 (APAH…QPLA). The segment at 742-1550 (MVSLLALLTF…KQLEDERRKS (809 aa)) is cyclic di-GMP binding domain. A compositionally biased stretch (low complexity) spans 768–796 (APAHQPEASDLPPLPALLPATSGAAQAGS). A helical transmembrane segment spans residues 1513–1533 (VLLVGLLGCILIVSVLARALA).

In the N-terminal section; belongs to the glycosyltransferase 2 family. It in the C-terminal section; belongs to the AcsB/BcsB family. Mg(2+) serves as cofactor.

It is found in the cell inner membrane. It carries out the reaction [(1-&gt;4)-beta-D-glucosyl](n) + UDP-alpha-D-glucose = [(1-&gt;4)-beta-D-glucosyl](n+1) + UDP + H(+). The protein operates within glycan metabolism; bacterial cellulose biosynthesis. In terms of biological role, bifunctional protein comprised of a catalytic subunit and a regulatory subunit. The catalytic subunit of cellulose synthase polymerizes uridine 5'-diphosphate glucose to cellulose in a processive way. The thick cellulosic mats generated by this enzyme probably provide a specialized protective environment to the bacterium. The regulatory subunit binds bis-(3'-5') cyclic diguanylic acid (c-di-GMP). This Novacetimonas hansenii (Komagataeibacter hansenii) protein is Cellulose synthase 1 (acsAB).